The chain runs to 182 residues: Large ribosomal subunit protein uL10 (182 aa).

Belongs to the universal ribosomal protein uL10 family. Part of the ribosomal stalk of the 50S ribosomal subunit. The N-terminus interacts with L11 and the large rRNA to form the base of the stalk. The C-terminus forms an elongated spine to which L12 dimers bind in a sequential fashion forming a multimeric L10(L12)X complex.

In terms of biological role, forms part of the ribosomal stalk, playing a central role in the interaction of the ribosome with GTP-bound translation factors. This Chloroflexus aurantiacus (strain ATCC 29364 / DSM 637 / Y-400-fl) protein is Large ribosomal subunit protein uL10.